Reading from the N-terminus, the 311-residue chain is Peptide methionine sulfoxide reductase MsrA/MsrB 2 (311 aa).

A peptide methionine sulfoxide reductase A region spans residues 1-155 (MHEIYLAGGC…PNGYCHINVN (155 aa)). Cys-10 is a catalytic residue. Residues 172-295 (DEELKKTLSP…NSLSIRFIPK (124 aa)) enclose the MsrB domain. Cys-284 (nucleophile) is an active-site residue.

In the N-terminal section; belongs to the MsrA Met sulfoxide reductase family. The protein in the C-terminal section; belongs to the MsrB Met sulfoxide reductase family.

The enzyme catalyses L-methionyl-[protein] + [thioredoxin]-disulfide + H2O = L-methionyl-(S)-S-oxide-[protein] + [thioredoxin]-dithiol. It catalyses the reaction [thioredoxin]-disulfide + L-methionine + H2O = L-methionine (S)-S-oxide + [thioredoxin]-dithiol. The catalysed reaction is L-methionyl-[protein] + [thioredoxin]-disulfide + H2O = L-methionyl-(R)-S-oxide-[protein] + [thioredoxin]-dithiol. Its function is as follows. Has an important function as a repair enzyme for proteins that have been inactivated by oxidation. Catalyzes the reversible oxidation-reduction of methionine sulfoxide in proteins to methionine. In Streptococcus pneumoniae serotype 4 (strain ATCC BAA-334 / TIGR4), this protein is Peptide methionine sulfoxide reductase MsrA/MsrB 2 (msrAB2).